The sequence spans 358 residues: Protein-glutamate methylesterase/protein-glutamine glutaminase (358 aa).

In terms of domain architecture, Response regulatory spans S5–E122. D56 bears the 4-aspartylphosphate mark. The region spanning G159–A351 is the CheB-type methylesterase domain. Catalysis depends on residues S171, H197, and D293.

Belongs to the CheB family. Phosphorylated by CheA. Phosphorylation of the N-terminal regulatory domain activates the methylesterase activity.

Its subcellular location is the cytoplasm. The enzyme catalyses [protein]-L-glutamate 5-O-methyl ester + H2O = L-glutamyl-[protein] + methanol + H(+). It catalyses the reaction L-glutaminyl-[protein] + H2O = L-glutamyl-[protein] + NH4(+). Functionally, involved in chemotaxis. Part of a chemotaxis signal transduction system that modulates chemotaxis in response to various stimuli. Catalyzes the demethylation of specific methylglutamate residues introduced into the chemoreceptors (methyl-accepting chemotaxis proteins or MCP) by CheR. Also mediates the irreversible deamidation of specific glutamine residues to glutamic acid. This is Protein-glutamate methylesterase/protein-glutamine glutaminase from Nitrosomonas europaea (strain ATCC 19718 / CIP 103999 / KCTC 2705 / NBRC 14298).